Here is a 409-residue protein sequence, read N- to C-terminus: Serine/threonine transporter SstT (409 aa).

A run of 9 helical transmembrane segments spans residues G14–A34, G57–I77, I89–F109, A149–L169, I190–V210, L224–V244, I296–L316, I338–I358, and F365–V385.

Belongs to the dicarboxylate/amino acid:cation symporter (DAACS) (TC 2.A.23) family.

The protein localises to the cell inner membrane. The catalysed reaction is L-serine(in) + Na(+)(in) = L-serine(out) + Na(+)(out). It carries out the reaction L-threonine(in) + Na(+)(in) = L-threonine(out) + Na(+)(out). Involved in the import of serine and threonine into the cell, with the concomitant import of sodium (symport system). This is Serine/threonine transporter SstT from Campylobacter fetus subsp. fetus (strain 82-40).